The following is a 443-amino-acid chain: Signal recognition particle 54 kDa protein (443 aa).

GTP is bound by residues glycine 107–threonine 114, aspartate 189–arginine 193, and threonine 247–aspartate 250.

The protein belongs to the GTP-binding SRP family. SRP54 subfamily. As to quaternary structure, part of the signal recognition particle protein translocation system, which is composed of SRP and FtsY. Archaeal SRP consists of a 7S RNA molecule of 300 nucleotides and two protein subunits: SRP54 and SRP19.

It is found in the cytoplasm. It catalyses the reaction GTP + H2O = GDP + phosphate + H(+). Functionally, involved in targeting and insertion of nascent membrane proteins into the cytoplasmic membrane. Binds to the hydrophobic signal sequence of the ribosome-nascent chain (RNC) as it emerges from the ribosomes. The SRP-RNC complex is then targeted to the cytoplasmic membrane where it interacts with the SRP receptor FtsY. This is Signal recognition particle 54 kDa protein from Pyrococcus horikoshii (strain ATCC 700860 / DSM 12428 / JCM 9974 / NBRC 100139 / OT-3).